The sequence spans 112 residues: Protein FAM32A (112 aa).

Residues 23 to 58 (TKRKKKKKDKDKAKLLEAMGTSKKNEEEKRRGLDKR) are disordered. Basic and acidic residues predominate over residues 45–58 (KKNEEEKRRGLDKR).

This sequence belongs to the FAM32 family.

It is found in the nucleus. In terms of biological role, may induce G2 arrest and apoptosis. May also increase cell sensitivity to apoptotic stimuli. The sequence is that of Protein FAM32A (FAM32A) from Bos taurus (Bovine).